Here is an 885-residue protein sequence, read N- to C-terminus: Rho GTPase-activating protein gacFF (885 aa).

Residues 168–182 (TTTNNSNNSNSNNNN) are compositionally biased toward low complexity. A disordered region spans residues 168–187 (TTTNNSNNSNSNNNNKQYNS). Residues 222–249 (LINKIQNDSEQLKLVLSQVEQQIEFLKS) adopt a coiled-coil conformation. An F-box domain is found at 348–394 (SDIFSLLPTHLTLYVFSYLEPKELLILAQVSSQWQKLAGDNLLWVRF). Residues 464–571 (SSSKEGWLYK…WMILLNSIIK (108 aa)) enclose the PH domain. Low complexity-rich tracts occupy residues 594-622 (NNVY…NNNN) and 629-648 (LPPL…SSTG). The tract at residues 594 to 680 (NNVYINNNNN…GGGSGGNNNF (87 aa)) is disordered. A Rho-GAP domain is found at 701–885 (VALSKILENQ…KYYDEIFIKK (185 aa)).

The protein localises to the cytoplasm. Rho GTPase-activating protein involved in the signal transduction pathway. The protein is Rho GTPase-activating protein gacFF (gacFF) of Dictyostelium discoideum (Social amoeba).